We begin with the raw amino-acid sequence, 518 residues long: GMP synthase [glutamine-hydrolyzing] (518 aa).

In terms of domain architecture, Glutamine amidotransferase type-1 spans 6-200 (RLLIIDFGSQ…FVKLAGFKGD (195 aa)). The Nucleophile role is filled by Cys84. Catalysis depends on residues His175 and Glu177. In terms of domain architecture, GMPS ATP-PPase spans 201-393 (WTMGAYREEA…LGLPDSFIGR (193 aa)). 228–234 (SGGVDSS) contributes to the ATP binding site.

Homodimer.

It catalyses the reaction XMP + L-glutamine + ATP + H2O = GMP + L-glutamate + AMP + diphosphate + 2 H(+). The protein operates within purine metabolism; GMP biosynthesis; GMP from XMP (L-Gln route): step 1/1. In terms of biological role, catalyzes the synthesis of GMP from XMP. In Cereibacter sphaeroides (strain ATCC 17025 / ATH 2.4.3) (Rhodobacter sphaeroides), this protein is GMP synthase [glutamine-hydrolyzing].